Here is a 308-residue protein sequence, read N- to C-terminus: Ribosomal RNA large subunit methyltransferase F (308 aa).

This sequence belongs to the methyltransferase superfamily. METTL16/RlmF family.

Its subcellular location is the cytoplasm. It catalyses the reaction adenosine(1618) in 23S rRNA + S-adenosyl-L-methionine = N(6)-methyladenosine(1618) in 23S rRNA + S-adenosyl-L-homocysteine + H(+). Functionally, specifically methylates the adenine in position 1618 of 23S rRNA. In Escherichia fergusonii (strain ATCC 35469 / DSM 13698 / CCUG 18766 / IAM 14443 / JCM 21226 / LMG 7866 / NBRC 102419 / NCTC 12128 / CDC 0568-73), this protein is Ribosomal RNA large subunit methyltransferase F.